An 80-amino-acid chain; its full sequence is SPbeta prophage-derived thioredoxin-like protein YosR (80 aa).

The 80-residue stretch at 1–80 folds into the Thioredoxin domain; the sequence is MRLIKLEQPN…ELDELLKELR (80 aa). An intrachain disulfide couples Cys11 to Cys14.

Belongs to the thioredoxin family.

This chain is SPbeta prophage-derived thioredoxin-like protein YosR (yosR), found in Bacillus subtilis (strain 168).